Consider the following 140-residue polypeptide: MAGWQSYVDNLMCDGCCQEAAIVGYCDAKYVWAATAGGVFQSITPAEIDVIIGKDREGFFTNGLTLGGKKCSVIRDSLYVDSDCTMDIRTKSQGGEPTYNVAVGRAGRVLVFVMGKEGVHGGGLNKKAYSMAKYLRDSGF.

Alanine 2 is modified (N-acetylalanine).

Belongs to the profilin family. Occurs in many kinds of cells as a complex with monomeric actin in a 1:1 ratio. Interacts with PFN2. Interacts with ACTMAP (via N-terminus); the interaction may facilitate efficient cleavage of the acetylated N-terminus of immature actin by ACTMAP.

The protein resides in the cytoplasm. It localises to the cytoskeleton. Binds to actin and affects the structure of the cytoskeleton. At high concentrations, profilin prevents the polymerization of actin, whereas it enhances it at low concentrations. By binding to PIP2, it inhibits the formation of IP3 and DG. The polypeptide is Profilin-2 (Pfn2) (Rattus norvegicus (Rat)).